The chain runs to 339 residues: tRNA N6-adenosine threonylcarbamoyltransferase (339 aa).

Residues histidine 112 and histidine 116 each coordinate Fe cation. Residues 135–139 (LVSGG), aspartate 168, glycine 181, and asparagine 273 each bind substrate. Residue aspartate 301 coordinates Fe cation.

Belongs to the KAE1 / TsaD family. Requires Fe(2+) as cofactor.

Its subcellular location is the cytoplasm. The enzyme catalyses L-threonylcarbamoyladenylate + adenosine(37) in tRNA = N(6)-L-threonylcarbamoyladenosine(37) in tRNA + AMP + H(+). Required for the formation of a threonylcarbamoyl group on adenosine at position 37 (t(6)A37) in tRNAs that read codons beginning with adenine. Is involved in the transfer of the threonylcarbamoyl moiety of threonylcarbamoyl-AMP (TC-AMP) to the N6 group of A37, together with TsaE and TsaB. TsaD likely plays a direct catalytic role in this reaction. The polypeptide is tRNA N6-adenosine threonylcarbamoyltransferase (Coxiella burnetii (strain RSA 493 / Nine Mile phase I)).